The primary structure comprises 519 residues: Zinc finger and BTB domain-containing protein 18.3 (519 aa).

In terms of domain architecture, BTB spans 24–91 (CDCTVLVGDA…MYEGKLQFKD (68 aa)). The interval 189–227 (ASIPQTGGEVDTHTTAAGKTADSPCSSTGSLSHRSATSM) is disordered. Polar residues predominate over residues 201–227 (HTTAAGKTADSPCSSTGSLSHRSATSM). 4 consecutive C2H2-type zinc fingers follow at residues 367–389 (FMCP…LSTH), 407–429 (PTCS…ERTH), 435–457 (FTCT…AVVH), and 463–486 (HACK…RKFH).

This sequence belongs to the krueppel C2H2-type zinc-finger protein family. ZBTB18 subfamily.

The protein localises to the nucleus. Transcriptional repressor that plays a role in various developmental processes. Specifically binds the consensus DNA sequence 5'-[AC]ACATCTG[GT][AC]-3' which contains the E box core, and acts by recruiting chromatin remodeling multiprotein complexes. The protein is Zinc finger and BTB domain-containing protein 18.3 (zbtb18.3) of Xenopus laevis (African clawed frog).